The chain runs to 452 residues: cAMP-dependent protein kinase regulatory subunit (452 aa).

The segment at 28-212 (QFCANYFNSK…ELSKTLGSNF (185 aa)) is dimerization and phosphorylation. The segment at 74–163 (IMTTNKRQPS…APPVPKSKIP (90 aa)) is disordered. Over residues 75-84 (MTTNKRQPSF) the composition is skewed to polar residues. A compositionally biased stretch (basic and acidic residues) spans 95–106 (SIDHHHDDDPKE). Serine 173 carries the phosphoserine modification. A nucleoside 3',5'-cyclic phosphate-binding positions include 213 to 330 (LFRQ…FLKD) and 333 to 451 (VLSS…QGSS). 3',5'-cyclic AMP is bound by residues glutamate 278, arginine 287, glutamate 399, and arginine 408.

This sequence belongs to the cAMP-dependent kinase regulatory chain family. Tetramer, composed of 2 regulatory (R) and 2 catalytic (C) subunits. In the presence of cAMP it dissociates into 2 active monomeric C subunits and an R dimer.

The chain is cAMP-dependent protein kinase regulatory subunit (PKAR) from Debaryomyces hansenii (strain ATCC 36239 / CBS 767 / BCRC 21394 / JCM 1990 / NBRC 0083 / IGC 2968) (Yeast).